A 120-amino-acid chain; its full sequence is Large ribosomal subunit protein uL29 (120 aa).

The protein belongs to the universal ribosomal protein uL29 family. Component of the large ribosomal subunit. Mature ribosomes consist of a small (40S) and a large (60S) subunit. The 40S subunit contains about 32 different proteins and 1 molecule of RNA (18S). The 60S subunit contains 45 different proteins and 3 molecules of RNA (25S, 5.8S and 5S).

The protein resides in the cytoplasm. Its function is as follows. Component of the ribosome, a large ribonucleoprotein complex responsible for the synthesis of proteins in the cell. The small ribosomal subunit (SSU) binds messenger RNAs (mRNAs) and translates the encoded message by selecting cognate aminoacyl-transfer RNA (tRNA) molecules. The large subunit (LSU) contains the ribosomal catalytic site termed the peptidyl transferase center (PTC), which catalyzes the formation of peptide bonds, thereby polymerizing the amino acids delivered by tRNAs into a polypeptide chain. The nascent polypeptides leave the ribosome through a tunnel in the LSU and interact with protein factors that function in enzymatic processing, targeting, and the membrane insertion of nascent chains at the exit of the ribosomal tunnel. This is Large ribosomal subunit protein uL29 from Candida albicans (strain SC5314 / ATCC MYA-2876) (Yeast).